The sequence spans 406 residues: Succinylornithine transaminase (406 aa).

K252 bears the N6-(pyridoxal phosphate)lysine mark.

It belongs to the class-III pyridoxal-phosphate-dependent aminotransferase family. AstC subfamily. The cofactor is pyridoxal 5'-phosphate.

The enzyme catalyses N(2)-succinyl-L-ornithine + 2-oxoglutarate = N-succinyl-L-glutamate 5-semialdehyde + L-glutamate. It participates in amino-acid degradation; L-arginine degradation via AST pathway; L-glutamate and succinate from L-arginine: step 3/5. Functionally, catalyzes the transamination of N(2)-succinylornithine and alpha-ketoglutarate into N(2)-succinylglutamate semialdehyde and glutamate. Can also act as an acetylornithine aminotransferase. This Escherichia coli O127:H6 (strain E2348/69 / EPEC) protein is Succinylornithine transaminase.